Reading from the N-terminus, the 516-residue chain is uncharacterized protein (516 aa).

The interval 1–35 is disordered; the sequence is MAERTSESSSESASFDLEKQQSNHHDRYQSSVSSE. Residues 16–28 show a composition bias toward basic and acidic residues; the sequence is DLEKQQSNHHDRY. Ser-31 carries the phosphoserine modification. 12 helical membrane passes run 77–97, 111–131, 143–163, 166–186, 198–218, 231–251, 301–321, 345–365, 386–406, 412–432, 439–461, and 481–501; these read VAVM…FSGA, VALL…VVWA, MIIA…AKDI, VMIC…TVAG, GLVI…SPIV, WTSY…IIFH, LLIF…VYGI, SLPY…VALF, LPSM…LAWT, IHWI…ITIF, IIDC…RSSF, and AGSL…MLFL.

The protein belongs to the major facilitator superfamily.

Its subcellular location is the membrane. This is an uncharacterized protein from Schizosaccharomyces pombe (strain 972 / ATCC 24843) (Fission yeast).